The sequence spans 187 residues: CASP-like protein 2 (187 aa).

The Cytoplasmic segment spans residues 1 to 24 (MKVSAVETGEISQVSAPRKGMIRG). The helical transmembrane segment at 25–45 (LSIMDFILRIVAAIGTLGSAL) threads the bilayer. The Extracellular portion of the chain corresponds to 46–72 (STGTTRETLPFTTQFVKFRAVFDDLPT). A helical transmembrane segment spans residues 73 to 93 (FVFFVTSNSIVCGYLVLSLAL). Residues 94–108 (SFFHIIRRSSAAKSR) lie on the Cytoplasmic side of the membrane. A helical transmembrane segment spans residues 109 to 129 (ILLVFLDTVMFGLLTTGAAAA). Residues 130–163 (GTIVYVSHYGNVNANWFPFCGQYNHFCERISGSL) are Extracellular-facing. A helical membrane pass occupies residues 164-184 (IGSFIAVVIFMIIILMSAVSI). The Cytoplasmic segment spans residues 185–187 (SKH).

Belongs to the Casparian strip membrane proteins (CASP) family. Homodimer and heterodimers.

It localises to the cell membrane. In Lotus japonicus (Lotus corniculatus var. japonicus), this protein is CASP-like protein 2.